Here is a 100-residue protein sequence, read N- to C-terminus: Putative septation protein SpoVG (100 aa).

Belongs to the SpoVG family.

In terms of biological role, could be involved in septation. The chain is Putative septation protein SpoVG from Staphylococcus aureus (strain JH1).